Reading from the N-terminus, the 492-residue chain is Ketol-acid reductoisomerase (NADP(+)) (492 aa).

A KARI N-terminal Rossmann domain is found at 17-208 (LGQCRLMKKN…GSNKAGVLES (192 aa)). Residues 45–48 (CGSQ), Arg-68, Ser-76, and Ser-78 contribute to the NADP(+) site. His-132 is an active-site residue. Gly-158 lines the NADP(+) pocket. 2 consecutive KARI C-terminal knotted domains span residues 209-344 (SFVA…KAPV) and 345-487 (YCET…MKDM). Positions 217, 221, 389, and 393 each coordinate Mg(2+). Ser-414 is a binding site for substrate.

Belongs to the ketol-acid reductoisomerase family. Mg(2+) serves as cofactor.

It catalyses the reaction (2R)-2,3-dihydroxy-3-methylbutanoate + NADP(+) = (2S)-2-acetolactate + NADPH + H(+). It carries out the reaction (2R,3R)-2,3-dihydroxy-3-methylpentanoate + NADP(+) = (S)-2-ethyl-2-hydroxy-3-oxobutanoate + NADPH + H(+). It functions in the pathway amino-acid biosynthesis; L-isoleucine biosynthesis; L-isoleucine from 2-oxobutanoate: step 2/4. The protein operates within amino-acid biosynthesis; L-valine biosynthesis; L-valine from pyruvate: step 2/4. In terms of biological role, involved in the biosynthesis of branched-chain amino acids (BCAA). Catalyzes an alkyl-migration followed by a ketol-acid reduction of (S)-2-acetolactate (S2AL) to yield (R)-2,3-dihydroxy-isovalerate. In the isomerase reaction, S2AL is rearranged via a Mg-dependent methyl migration to produce 3-hydroxy-3-methyl-2-ketobutyrate (HMKB). In the reductase reaction, this 2-ketoacid undergoes a metal-dependent reduction by NADPH to yield (R)-2,3-dihydroxy-isovalerate. This Blochmanniella floridana protein is Ketol-acid reductoisomerase (NADP(+)).